A 226-amino-acid polypeptide reads, in one-letter code: PKHD-type hydroxylase mma_3618 (226 aa).

Positions 78–178 (RYMPPLFNRY…RISSFFWVQS (101 aa)) constitute a Fe2OG dioxygenase domain. Positions 96, 98, and 159 each coordinate Fe cation. Arg-169 contributes to the 2-oxoglutarate binding site.

Fe(2+) serves as cofactor. L-ascorbate is required as a cofactor.

The protein is PKHD-type hydroxylase mma_3618 of Janthinobacterium sp. (strain Marseille) (Minibacterium massiliensis).